The following is a 220-amino-acid chain: Deoxyribose-phosphate aldolase (220 aa).

Asp-89 serves as the catalytic Proton donor/acceptor. Catalysis depends on Lys-151, which acts as the Schiff-base intermediate with acetaldehyde. Residue Lys-180 is the Proton donor/acceptor of the active site.

Belongs to the DeoC/FbaB aldolase family. DeoC type 1 subfamily.

The protein localises to the cytoplasm. It carries out the reaction 2-deoxy-D-ribose 5-phosphate = D-glyceraldehyde 3-phosphate + acetaldehyde. The protein operates within carbohydrate degradation; 2-deoxy-D-ribose 1-phosphate degradation; D-glyceraldehyde 3-phosphate and acetaldehyde from 2-deoxy-alpha-D-ribose 1-phosphate: step 2/2. In terms of biological role, catalyzes a reversible aldol reaction between acetaldehyde and D-glyceraldehyde 3-phosphate to generate 2-deoxy-D-ribose 5-phosphate. This is Deoxyribose-phosphate aldolase from Streptococcus pneumoniae (strain 70585).